A 3914-amino-acid polypeptide reads, in one-letter code: Trichosetin synthetase PKS-NRPS1 (3914 aa).

The Ketosynthase family 3 (KS3) domain occupies 4 to 420; that stretch reads NEPIAIIGSA…GTNAHAIIEA (417 aa). Active-site for beta-ketoacyl synthase activity residues include Cys-177, His-301, and His-340. A malonyl-CoA:ACP transacylase (MAT) domain region spans residues 525–847; it reads VLTGQGAQWP…REKDDIQQFA (323 aa). Positions 913–1047 are N-terminal hotdog fold; the sequence is HPILGRRCHD…AHVKASLSVP (135 aa). Residues 913–1214 form a dehydratase (DH) domain region; it reads HPILGRRCHD…MELVPFSPAT (302 aa). One can recognise a PKS/mFAS DH domain in the interval 913 to 1216; the sequence is HPILGRRCHD…LVPFSPATPE (304 aa). The Proton acceptor; for dehydratase activity role is filled by His-946. The segment at 1062–1216 is C-terminal hotdog fold; the sequence is LRKVEVDRFY…LVPFSPATPE (155 aa). Asp-1122 functions as the Proton donor; for dehydratase activity in the catalytic mechanism. The segment at 1364–1593 is methyltransferase (MT) domain; it reads EGFGLDLVNK…DLPETKSTEL (230 aa). The interval 2083–2255 is ketoreductase (KR) domain; that stretch reads TFLLIGLSGE…VAASSIDISS (173 aa). Positions 2356-2436 constitute a Carrier 1 domain; sequence LADVKTKADA…DLIEESLNLI (81 aa). The residue at position 2396 (Ser-2396) is an O-(pantetheine 4'-phosphoryl)serine. Positions 2447–2518 are disordered; it reads EAGSTPTTQP…DSTDNSTPLK (72 aa). Positions 2481-2500 are enriched in polar residues; that stretch reads QQTGSDSSRSPIDTPLTSME. The segment at 2529–2956 is condensation (C) domain; sequence SYGQAGFWFL…VQGTNKAADT (428 aa). The tract at residues 2991 to 3388 is adenylation (A) (KR) domain; that stretch reads QTIQANSTKV…LLFCDGRLED (398 aa). In terms of domain architecture, Carrier 2 spans 3502 to 3579; sequence GTLTVAEQRL…TMAVVLESCG (78 aa). Residue Ser-3539 is modified to O-(pantetheine 4'-phosphoryl)serine. Residues 3615–3831 are reductase (RED) domain; the sequence is LTGSAGYLGR…VLPTGDIVKA (217 aa).

This sequence in the C-terminal section; belongs to the NRP synthetase family.

It carries out the reaction L-serine + 7 malonyl-CoA + acetyl-CoA + 2 S-adenosyl-L-methionine + ATP + 8 NADPH + 11 H(+) = (5S)-3-[(2E,6R,8E,10E,12E)-2,6-dimethyltetradeca-2,8,10,12-tetraenoyl]-5-(hydroxymethyl)pyrrolidine-2,4-dione + AMP + 2 S-adenosyl-L-homocysteine + 7 CO2 + diphosphate + 8 NADP(+) + 8 CoA + 6 H2O. It functions in the pathway mycotoxin biosynthesis. Functionally, hybrid PKS-NRPS synthetase; part of the gene cluster that mediates the biosynthesis of trichosetin, a trans-fused decalin-containing tetramic acid with antimicrobial activity. The PKS module of PKS-NRPS1 together with the enoylreductase (ER) catalyze the formation of the polyketide unit which is then conjugated to L-serine by the condensation domain of the PKS-NRPS1 NRPS module. Activity of the Dieckmann cyclase domain (RED) results in release of the Dieckmann product intermediate. Diels-Alderase (DA) is involved in endo-selective Diels-Alder cycloaddition to form the decalin ring, leading to the production of N-desmethylequisetin also called trichosetin. The cluster does not contain the equisetin N-methyltransferase and consequently, trichosetin is isolated as final product. The sequence is that of Trichosetin synthetase PKS-NRPS1 from Gibberella fujikuroi (strain CBS 195.34 / IMI 58289 / NRRL A-6831) (Bakanae and foot rot disease fungus).